A 172-amino-acid polypeptide reads, in one-letter code: Small ribosomal subunit protein uS5 (172 aa).

An S5 DRBM domain is found at 15 to 78 (LNDKLIFINR…ANAKRNLSRI (64 aa)).

It belongs to the universal ribosomal protein uS5 family. Part of the 30S ribosomal subunit. Contacts proteins S4 and S8.

Its function is as follows. With S4 and S12 plays an important role in translational accuracy. Functionally, located at the back of the 30S subunit body where it stabilizes the conformation of the head with respect to the body. The protein is Small ribosomal subunit protein uS5 of Dehalococcoides mccartyi (strain ATCC BAA-2266 / KCTC 15142 / 195) (Dehalococcoides ethenogenes (strain 195)).